The following is a 191-amino-acid chain: Putative endogenous retrovirus group K member 11-1 Env polyprotein (191 aa).

Positions Met-1–Val-191 are truncated surface protein.

Belongs to the beta type-B retroviral envelope protein family. HERV class-II K(HML-8) env subfamily. Cerebellum and testis.

The protein resides in the virion. Retroviral envelope proteins mediate receptor recognition and membrane fusion during early infection. Endogenous envelope proteins may have kept, lost or modified their original function during evolution. In Homo sapiens (Human), this protein is Putative endogenous retrovirus group K member 11-1 Env polyprotein (ERVK11-1).